A 142-amino-acid chain; its full sequence is Endoribonuclease YbeY (142 aa).

H107, H111, and D117 together coordinate Zn(2+).

It belongs to the endoribonuclease YbeY family. It depends on Zn(2+) as a cofactor.

It localises to the cytoplasm. In terms of biological role, single strand-specific metallo-endoribonuclease involved in late-stage 70S ribosome quality control and in maturation of the 3' terminus of the 16S rRNA. This is Endoribonuclease YbeY from Chlorobium phaeobacteroides (strain DSM 266 / SMG 266 / 2430).